The chain runs to 109 residues: Iron-sulfur cluster assembly protein CyaY (109 aa).

Belongs to the frataxin family.

Its function is as follows. Involved in iron-sulfur (Fe-S) cluster assembly. May act as a regulator of Fe-S biogenesis. The sequence is that of Iron-sulfur cluster assembly protein CyaY from Acidovorax ebreus (strain TPSY) (Diaphorobacter sp. (strain TPSY)).